The sequence spans 839 residues: Transient receptor potential cation channel subfamily V member 1 (839 aa).

The interval 1–60 (MEKWASLDSDESEPPAQENSCPDPPDRDPNSKPPPAKPHIFATRSRTRLFGKGDSEEASP) is disordered. Residues 1 to 433 (MEKWASLDSD…QDKWDRFVKR (433 aa)) are Cytoplasmic-facing. The ANK 1 repeat unit spans residues 111–139 (RLYDRRSIFDAVAQSNCQELESLLSFLQK). Residue Arg-116 participates in ATP binding. Residue Ser-117 is modified to Phosphoserine; by PKA and PKD. Thr-145 bears the Phosphothreonine; by PKA; in vitro mark. The stretch at 154–186 (TGKTCLLKAMLNLHNGQNDTIALLLDIARKTDS) is one ANK 2 repeat. Residues Lys-156, Lys-161, Asn-165, 200-203 (YKGQ), and 211-212 (ER) contribute to the ATP site. 4 ANK repeats span residues 204 to 229 (TALH…ADVQ), 250 to 277 (ELPL…QPAD), 286 to 322 (NTVL…KLHP), and 336 to 359 (TPLA…REIH). Position 371 is a phosphothreonine; by PKA; in vitro (Thr-371). Residues 394 to 416 (NSVLEVIAYSSSETPNRHDMLLV) form an ANK 7 repeat. Residues 434–455 (IFYFNFFVYCLYMIIFTTAAYY) form a helical membrane-spanning segment. Residues 456-472 (RPVEGLPPYKLNNTVGD) are Extracellular-facing. A helical membrane pass occupies residues 473 to 497 (YFRVTGEILSVSGGVYFFFRGIQYF). The Cytoplasmic segment spans residues 498 to 510 (LQRRPSLKSLFVD). Residue Ser-503 is modified to Phosphoserine; by PKC/PRKCE. The helical transmembrane segment at 511–532 (SYSEILFFVQSLFMLVSVVLYF) threads the bilayer. 512–513 (YS) is a binding site for resiniferatoxin. Topologically, residues 533 to 535 (SHR) are extracellular. A helical membrane pass occupies residues 536–556 (KEYVASMVFSLAMGWTNMLYY). Positions 551 and 558 each coordinate resiniferatoxin. Over 557 to 559 (TRG) the chain is Cytoplasmic. Residues 560–598 (FQQMGIYAVMIEKMILRDLCRFMFVYLVFLFGFSTAVVT) form a helical membrane-spanning segment. Residues 599–630 (LIEDGKNNSLPVESPPHKCRGSACRPGNSYNS) are Extracellular-facing. A glycan (N-linked (GlcNAc...) asparagine) is linked at Asn-605. Positions 631–652 (LYSTCLELFKFTIGMGDLEFTE) form an intramembrane region, pore-forming. Position 644 (Gly-644) interacts with Na(+). Residues 644 to 647 (GMGD) carry the Selectivity filter motif. Asp-647 lines the Ca(2+) pocket. The Extracellular segment spans residues 653 to 656 (NYDF). The helical transmembrane segment at 657 to 683 (KAVFIILLLAYVILTYILLLNMLIALM) threads the bilayer. The Cytoplasmic portion of the chain corresponds to 684–839 (GETVNKIAQE…FKDSMAPGEK (156 aa)). The interval 685-713 (ETVNKIAQESKNIWKLQRAITILDTEKSF) is AD. Thr-705 bears the Phosphothreonine mark. The interaction with calmodulin stretch occupies residues 768 to 802 (EGVKRTLSFSLRSGRVSGRNWKNFALVPLLRDAST). Ser-775 is modified (phosphoserine). A required for PIP2-mediated channel inhibition region spans residues 778–793 (LRSGRVSGRNWKNFAL). Ser-801 carries the phosphoserine; by PKC/PRKCE and PKC/PRKCZ modification. Basic and acidic residues predominate over residues 802-815 (TRDRHSTQPEEVQL). Residues 802–839 (TRDRHSTQPEEVQLKHYTGSLKPEDAEVFKDSMAPGEK) are disordered. Ser-821 is subject to Phosphoserine. The segment covering 823–839 (KPEDAEVFKDSMAPGEK) has biased composition (basic and acidic residues).

The protein belongs to the transient receptor (TC 1.A.4) family. TrpV subfamily. TRPV1 sub-subfamily. In terms of assembly, homotetramer. May also form a heteromeric channel with TRPV3. Interacts with CALM, PRKCM and CSK. Interacts with PRKCG and NTRK1, probably by forming a trimeric complex. Interacts with PIRT. Interacts with the Scolopendra mutilans RhTx toxin. Interacts with TMEM100. Interacts with PACS2. Post-translationally, phosphorylation by PKA reverses capsaicin-induced dephosphorylation at multiple sites probably including Ser-117 as a major phosphorylation site. Phosphorylation by CAMKII seems to regulate binding to vanilloids. Phosphorylated and modulated by PRKCE, PRKCM and probably PRKCZ. Dephosphorylation by calcineurin seems to lead to receptor desensitization and phosphorylation by CAMKII recovers activity. Detected in neurons in the root ganglia (at protein level). Detected in dorsal root ganglia.

Its subcellular location is the postsynaptic cell membrane. It is found in the cell projection. The protein localises to the dendritic spine membrane. The protein resides in the cell membrane. The catalysed reaction is Ca(2+)(in) = Ca(2+)(out). The enzyme catalyses Mg(2+)(in) = Mg(2+)(out). It catalyses the reaction Na(+)(in) = Na(+)(out). It carries out the reaction K(+)(in) = K(+)(out). Its activity is regulated as follows. The channel is sensitized by ATP binding. Repeated stimulation with capsaicin gives rise to progressively smaller responses, due to desensitization. This desensitization is triggered by the influx of calcium ions and is inhibited by elevated ATP levels. Ca(2+) and CALM displace ATP from its binding site and trigger a conformation change that leads to a closed, desensitized channel. The double-knot toxin (DkTx) from the Chinese earth tiger tarantula activates the channel and traps it in an open conformation. The Scolopendra mutilans RhTx toxin potentiates the heat activation pathway mediated by this channel by binding to the charge-rich outer pore region (in an activated state). Channel activity is activated via the interaction with PIRT and phosphatidylinositol 4,5-bisphosphate (PIP2). Both PIRT and PIP2 are required to activate channel activity. Intracellular PIP2 inhibits desensitization. Its function is as follows. Non-selective calcium permeant cation channel involved in detection of noxious chemical and thermal stimuli. Seems to mediate proton influx and may be involved in intracellular acidosis in nociceptive neurons. Involved in mediation of inflammatory pain and hyperalgesia. Sensitized by a phosphatidylinositol second messenger system activated by receptor tyrosine kinases, which involves PKC isozymes and PCL. Activation by vanilloids, like capsaicin, and temperatures higher than 42 degrees Celsius. Upon activation, exhibits a time- and Ca(2+)-dependent outward rectification, followed by a long-lasting refractory state. Mild extracellular acidic pH (6.5) potentiates channel activation by noxious heat and vanilloids, whereas acidic conditions (pH &lt;6) directly activate the channel. Can be activated by endogenous compounds, including 12-hydroperoxytetraenoic acid and bradykinin. Acts as ionotropic endocannabinoid receptor with central neuromodulatory effects. Triggers a form of long-term depression (TRPV1-LTD) mediated by the endocannabinoid anandamine in the hippocampus and nucleus accumbens by affecting AMPA receptors endocytosis. In Mus musculus (Mouse), this protein is Transient receptor potential cation channel subfamily V member 1 (Trpv1).